Consider the following 173-residue polypeptide: Crossover junction endodeoxyribonuclease RuvC (173 aa).

Residues Asp-8, Glu-67, and Asp-139 contribute to the active site. Asp-8, Glu-67, and Asp-139 together coordinate Mg(2+).

Belongs to the RuvC family. Homodimer which binds Holliday junction (HJ) DNA. The HJ becomes 2-fold symmetrical on binding to RuvC with unstacked arms; it has a different conformation from HJ DNA in complex with RuvA. In the full resolvosome a probable DNA-RuvA(4)-RuvB(12)-RuvC(2) complex forms which resolves the HJ. Mg(2+) serves as cofactor.

It localises to the cytoplasm. It carries out the reaction Endonucleolytic cleavage at a junction such as a reciprocal single-stranded crossover between two homologous DNA duplexes (Holliday junction).. Functionally, the RuvA-RuvB-RuvC complex processes Holliday junction (HJ) DNA during genetic recombination and DNA repair. Endonuclease that resolves HJ intermediates. Cleaves cruciform DNA by making single-stranded nicks across the HJ at symmetrical positions within the homologous arms, yielding a 5'-phosphate and a 3'-hydroxyl group; requires a central core of homology in the junction. The consensus cleavage sequence is 5'-(A/T)TT(C/G)-3'. Cleavage occurs on the 3'-side of the TT dinucleotide at the point of strand exchange. HJ branch migration catalyzed by RuvA-RuvB allows RuvC to scan DNA until it finds its consensus sequence, where it cleaves and resolves the cruciform DNA. In Vibrio vulnificus (strain YJ016), this protein is Crossover junction endodeoxyribonuclease RuvC.